Consider the following 243-residue polypeptide: Ribosomal RNA small subunit methyltransferase G (243 aa).

Residues Gly82, Phe87, 133 to 134 (AE), and Arg152 contribute to the S-adenosyl-L-methionine site.

Belongs to the methyltransferase superfamily. RNA methyltransferase RsmG family.

The protein resides in the cytoplasm. Functionally, specifically methylates the N7 position of a guanine in 16S rRNA. In Clostridium novyi (strain NT), this protein is Ribosomal RNA small subunit methyltransferase G.